The chain runs to 203 residues: NADH-quinone oxidoreductase subunit C (203 aa).

This sequence belongs to the complex I 30 kDa subunit family. In terms of assembly, NDH-1 is composed of 14 different subunits. Subunits NuoB, C, D, E, F, and G constitute the peripheral sector of the complex.

It is found in the cell inner membrane. The enzyme catalyses a quinone + NADH + 5 H(+)(in) = a quinol + NAD(+) + 4 H(+)(out). In terms of biological role, NDH-1 shuttles electrons from NADH, via FMN and iron-sulfur (Fe-S) centers, to quinones in the respiratory chain. The immediate electron acceptor for the enzyme in this species is believed to be ubiquinone. Couples the redox reaction to proton translocation (for every two electrons transferred, four hydrogen ions are translocated across the cytoplasmic membrane), and thus conserves the redox energy in a proton gradient. The sequence is that of NADH-quinone oxidoreductase subunit C from Verminephrobacter eiseniae (strain EF01-2).